The sequence spans 318 residues: Malonyl CoA-acyl carrier protein transacylase, mitochondrial (318 aa).

Belongs to the FabD family.

It is found in the mitochondrion. The catalysed reaction is holo-[ACP] + malonyl-CoA = malonyl-[ACP] + CoA. It participates in lipid metabolism; fatty acid biosynthesis. Functionally, involved in biosynthesis of fatty acids in mitochondria. The chain is Malonyl CoA-acyl carrier protein transacylase, mitochondrial (mct1) from Schizosaccharomyces pombe (strain 972 / ATCC 24843) (Fission yeast).